The following is an 845-amino-acid chain: U-box domain-containing protein 52 (845 aa).

Disordered stretches follow at residues 180–210 (RPSESDASGSIRFERSSSTSGSTDSPRLPPE) and 229–258 (SPALKHSMGSNAVAQMDTSSSGTDQEEVST). A compositionally biased stretch (low complexity) spans 187–204 (SGSIRFERSSSTSGSTDS). Residues 236 to 251 (MGSNAVAQMDTSSSGT) show a composition bias toward polar residues. Residues 351 to 468 (SITDNQVNLN…REKDKLQASL (118 aa)) adopt a coiled-coil conformation. Positions 490 to 754 (FAENLKIGIG…DLKDQIIPAL (265 aa)) constitute a Protein kinase domain. Residues 496-504 (IGIGAYGSV) and Lys-517 each bind ATP. The active-site Proton acceptor is the Asp-612. The U-box domain maps to 774–845 (GPPSHFICPL…AIMEWKSNKR (72 aa)).

Belongs to the protein kinase superfamily. Ser/Thr protein kinase family.

The enzyme catalyses L-seryl-[protein] + ATP = O-phospho-L-seryl-[protein] + ADP + H(+). It catalyses the reaction L-threonyl-[protein] + ATP = O-phospho-L-threonyl-[protein] + ADP + H(+). The catalysed reaction is S-ubiquitinyl-[E2 ubiquitin-conjugating enzyme]-L-cysteine + [acceptor protein]-L-lysine = [E2 ubiquitin-conjugating enzyme]-L-cysteine + N(6)-ubiquitinyl-[acceptor protein]-L-lysine.. The protein operates within protein modification; protein ubiquitination. Functionally, functions as an E3 ubiquitin ligase. The protein is U-box domain-containing protein 52 (PUB52) of Arabidopsis thaliana (Mouse-ear cress).